The primary structure comprises 99 residues: MICOS complex subunit MIC10 (99 aa).

2 helical membrane passes run 27–43 and 50–66; these read RFVY…LLFF and WASI…SAYT.

The protein belongs to the MICOS complex subunit Mic10 family. Component of the mitochondrial contact site and cristae organizing system (MICOS) complex. The MICOS complex associates with mitochondrial outer membrane proteins. Present in a large lipid-enriched complex called mitochondrial transmembrane lipoprotein (MTL) complex made of proteins located in the two mitochondrial membranes, including the TOM complex and the core components of the MICOS complex and containing at least digalactosyldiacylglycerol (DGDG).

It is found in the mitochondrion inner membrane. Its function is as follows. Component of the MICOS complex, a large protein complex of the mitochondrial inner membrane that plays crucial roles in the maintenance of crista junctions, inner membrane architecture, and formation of contact sites to the outer membrane. The chain is MICOS complex subunit MIC10 from Arabidopsis thaliana (Mouse-ear cress).